Reading from the N-terminus, the 985-residue chain is Thioredoxin domain-containing protein 11 (985 aa).

Residues 1 to 11 show a composition bias toward gly residues; sequence MSECGGRGGGS. Residues 1–38 are disordered; sequence MSECGGRGGGSSSSEDAEDEGGGGGGPAGSDCLSSSPT. Residues 29 to 38 show a composition bias toward low complexity; the sequence is GSDCLSSSPT. The chain crosses the membrane as a helical span at residues 65 to 85; it reads LLCGAVALGCALLLALKFTCS. A Thioredoxin 1 domain is found at 92–214; that stretch reads IPAKPPVSFF…IEKFVRRVMK (123 aa). Intrachain disulfides connect Cys469/Cys472 and Cys719/Cys722. The Thioredoxin 2 domain maps to 649-799; sequence LDPKQALMKL…LLRFILHHSD (151 aa). The stretch at 821–919 forms a coiled coil; the sequence is VLQRGHISHL…ASENLLTENT (99 aa). Ser828 carries the phosphoserine modification. A disordered region spans residues 935–985; sequence RDGAESLAAQREVHPKQPEPSATPQLPGSSPPPANVSATLVSERNKENRTD.

Belongs to the protein disulfide isomerase family. Interacts with the cytoplasmic part of DUOX1 and DUOX2. Interacts with TPO and CYBA. Widely expressed at low level. Expressed at higher level in thyroid and prostate.

The protein localises to the endoplasmic reticulum membrane. In terms of biological role, may act as a redox regulator involved in DUOX proteins folding. The interaction with DUOX1 and DUOX2 suggest that it belongs to a multiprotein complex constituting the thyroid H(2)O(2) generating system. It is however not sufficient to assist DUOX1 and DUOX2 in H(2)O(2) generation. This Homo sapiens (Human) protein is Thioredoxin domain-containing protein 11 (TXNDC11).